The sequence spans 104 residues: Large ribosomal subunit protein bL21 (104 aa).

The protein belongs to the bacterial ribosomal protein bL21 family. In terms of assembly, part of the 50S ribosomal subunit. Contacts protein L20.

In terms of biological role, this protein binds to 23S rRNA in the presence of protein L20. In Leptospira interrogans serogroup Icterohaemorrhagiae serovar copenhageni (strain Fiocruz L1-130), this protein is Large ribosomal subunit protein bL21.